A 57-amino-acid chain; its full sequence is MAVPFRRTSKTRKNKRRTHFKLEVPGMVECPECGEYKLSHRVCKACGTYKGEKVASK.

It belongs to the bacterial ribosomal protein bL32 family.

The polypeptide is Large ribosomal subunit protein bL32 (Shouchella clausii (strain KSM-K16) (Alkalihalobacillus clausii)).